The sequence spans 432 residues: Benzoyl-CoA reductase subunit B (432 aa).

This sequence belongs to the FldB/FldC dehydratase alpha/beta subunit family. As to quaternary structure, heterotetramer composed of A, B, C, and D subunits. Iron-sulfur cluster is required as a cofactor. Requires an oxidized flavin as cofactor.

The enzyme catalyses cyclohexa-1,5-diene-1-carbonyl-CoA + oxidized 2[4Fe-4S]-[ferredoxin] + 2 ADP + 2 phosphate = reduced 2[4Fe-4S]-[ferredoxin] + benzoyl-CoA + 2 ATP + 2 H2O. It carries out the reaction 3-hydroxybenzoyl-CoA + AH2 + 2 ATP + 2 H2O = 3-hydroxycyclohexa-1,5-diene-1-carbonyl-CoA + A + 2 ADP + 2 phosphate + 2 H(+). Functionally, catalyzes the anaerobic reduction of benzoyl-CoA and 3-hydroxybenzoyl-CoA to form cyclohexa-1,5-diene-1-carbonyl-CoA and 3-hydroxycyclohexa-1,5-diene-1-carbonyl-CoA, respectively. The enzyme also reduces other benzoyl-CoA analogs with small substituents at the aromatic ring. The protein is Benzoyl-CoA reductase subunit B (bcrB) of Thauera aromatica.